Reading from the N-terminus, the 406-residue chain is Large ribosomal subunit protein uL4z (406 aa).

Residues 56–95 (PYAVSKKAGHQTSAESWGTGRAVSRIPRVPGGGTHRAGQA) form a disordered region.

The protein belongs to the universal ribosomal protein uL4 family.

The chain is Large ribosomal subunit protein uL4z (RPL4A) from Arabidopsis thaliana (Mouse-ear cress).